Reading from the N-terminus, the 188-residue chain is Holliday junction branch migration complex subunit RuvA (188 aa).

The segment at 1–64 (MIAGISGRVL…QDGITLYGFS (64 aa)) is domain I. The interval 65–143 (NERKKELFLS…SAGIKDMRIY (79 aa)) is domain II. Tyrosine 143 is a region of interest (flexible linker). A domain III region spans residues 143–188 (YHESLEALISLGYPEKQAREAVKHVYREGMKTSELIKEALKFLSQR).

It belongs to the RuvA family. As to quaternary structure, homotetramer. Forms an RuvA(8)-RuvB(12)-Holliday junction (HJ) complex. HJ DNA is sandwiched between 2 RuvA tetramers; dsDNA enters through RuvA and exits via RuvB. An RuvB hexamer assembles on each DNA strand where it exits the tetramer. Each RuvB hexamer is contacted by two RuvA subunits (via domain III) on 2 adjacent RuvB subunits; this complex drives branch migration. In the full resolvosome a probable DNA-RuvA(4)-RuvB(12)-RuvC(2) complex forms which resolves the HJ.

It localises to the cytoplasm. Its function is as follows. The RuvA-RuvB-RuvC complex processes Holliday junction (HJ) DNA during genetic recombination and DNA repair, while the RuvA-RuvB complex plays an important role in the rescue of blocked DNA replication forks via replication fork reversal (RFR). RuvA specifically binds to HJ cruciform DNA, conferring on it an open structure. The RuvB hexamer acts as an ATP-dependent pump, pulling dsDNA into and through the RuvAB complex. HJ branch migration allows RuvC to scan DNA until it finds its consensus sequence, where it cleaves and resolves the cruciform DNA. This chain is Holliday junction branch migration complex subunit RuvA, found in Thermotoga petrophila (strain ATCC BAA-488 / DSM 13995 / JCM 10881 / RKU-1).